Reading from the N-terminus, the 1100-residue chain is Collagen alpha-2(I) chain (1100 aa).

Residues 1–982 form a disordered region; that stretch reads QYDGVKAPDP…PGPAGGGYDV (982 aa). 3 stretches are compositionally biased toward low complexity: residues 122–170, 200–209, and 216–237; these read EPGA…AAGP, EPGPNGAVGP, and PGNNGLNGAKGAAGTPGVAGAP. Pro residues predominate over residues 239–249; the sequence is FPGPRGGPGPQ. Residues 251-261 show a composition bias toward low complexity; it reads PQGAAGQRGLA. A compositionally biased stretch (gly residues) spans 268–277; the sequence is GVKGDGGPKG. Composition is skewed to low complexity over residues 333-352, 358-385, 435-448, and 460-472; these read MPGARGASGAAGPRGPPGDA, SGPAGLRGLPGSPGSSGPPGKEGAAGPA, APGPDGNNGATGAT, and QGASGAPGFQGLP. A compositionally biased stretch (gly residues) spans 473-482; it reads GPAGGAGEAG. Residues 507–517 are compositionally biased toward low complexity; the sequence is NPGAAGASGPQ. A compositionally biased stretch (gly residues) spans 530 to 557; the sequence is GTDGGKGEPGAAGAAGGPGHQGPGGMPG. Positions 568-579 are enriched in basic and acidic residues; that stretch reads KGEKGEGGHRGP. Positions 633 to 646 are enriched in low complexity; sequence PAGAPGFAGPPGAD. The segment covering 656 to 665 has biased composition (gly residues); the sequence is GPSGGKGESG. Low complexity-rich tracts occupy residues 666–691, 702–729, and 757–775; these read PSGPAGPAGQSGPPGASGPAGPTGAR, FPGAAGRVGAAGPAGLVGPPGAAGPAGK, and SGEKGXPGTPGTSGPLGLQ. Over residues 788–797 the composition is skewed to gly residues; sequence GSPGGAGAVG. Low complexity-rich tracts occupy residues 798 to 820 and 854 to 866; these read EAGRVGPAGPAGARGAPGNLGLP and AGPTGAAGRPGNR. The segment covering 867-876 has biased composition (gly residues); that stretch reads GESGPGGAAG. Residues 877 to 892 show a composition bias toward low complexity; it reads AVGPAGARGAAGPSGP. The span at 893 to 907 shows a compositional bias: basic and acidic residues; the sequence is RGEKGVAGEKGERGM. Over residues 916 to 935 the composition is skewed to low complexity; that stretch reads LQGMPGPSGPSGDTGSAGPN. A Fibrillar collagen NC1 domain is found at 1071-1100; sequence TRLPLLDLAPLDLGGADQEFGLDLGPVCFK.

This sequence belongs to the fibrillar collagen family.

The protein resides in the secreted. Its subcellular location is the extracellular space. The protein localises to the extracellular matrix. This is Collagen alpha-2(I) chain from Epinephelus caninus (Dogtooth grouper).